The sequence spans 263 residues: Hydroxyethylthiazole kinase 1 (263 aa).

Met-42 serves as a coordination point for substrate. Lys-118 and Thr-164 together coordinate ATP. Gly-191 contacts substrate.

This sequence belongs to the Thz kinase family. Mg(2+) is required as a cofactor.

The catalysed reaction is 5-(2-hydroxyethyl)-4-methylthiazole + ATP = 4-methyl-5-(2-phosphooxyethyl)-thiazole + ADP + H(+). It functions in the pathway cofactor biosynthesis; thiamine diphosphate biosynthesis; 4-methyl-5-(2-phosphoethyl)-thiazole from 5-(2-hydroxyethyl)-4-methylthiazole: step 1/1. In terms of biological role, catalyzes the phosphorylation of the hydroxyl group of 4-methyl-5-beta-hydroxyethylthiazole (THZ). The chain is Hydroxyethylthiazole kinase 1 from Clostridium botulinum (strain Okra / Type B1).